The primary structure comprises 463 residues: Sialic acid-binding Ig-like lectin 9 (463 aa).

An N-terminal signal peptide occupies residues 1–17; that stretch reads MLLLLLPLLWGRERAEG. Residues 18–348 are Extracellular-facing; the sequence is QTSKLLTMQS…SKATSGVTQG (331 aa). Residues 20 to 140 enclose the Ig-like V-type domain; that stretch reads SKLLTMQSSV…KHHRLSVNVT (121 aa). 3 cysteine pairs are disulfide-bonded: Cys36–Cys170, Cys41–Cys102, and Cys164–Cys213. A glycan (N-linked (GlcNAc...) asparagine) is linked at Asn101. Arg120 is a binding site for N-acetylneuraminate. N-linked (GlcNAc...) asparagine glycosylation is found at Asn138 and Asn161. An Ig-like C2-type 1 domain is found at 146–229; it reads PNILIPGTLE…ASVTTNKTVH (84 aa). Asn225, Asn231, Asn238, and Asn256 each carry an N-linked (GlcNAc...) asparagine glycan. The Ig-like C2-type 2 domain occupies 236–336; the sequence is PQNLTMTVFQ…GSQQVYLNVS (101 aa). A disulfide bridge links Cys272 with Cys320. An N-linked (GlcNAc...) asparagine glycan is attached at Asn334. The helical transmembrane segment at 349 to 369 threads the bilayer; it reads VVGGAGATALVFLSFCVIFVV. The Cytoplasmic segment spans residues 370–463; that stretch reads VRSCRKKSAR…TEYSEIKIHR (94 aa). The tract at residues 380 to 428 is disordered; sequence PAAGVGDTGIEDANAVRGSASQGPLTEPWAEDSPPDQPPPASARSSVGE. An ITIM motif motif is present at residues 431-436; that stretch reads LQYASL. The disordered stretch occupies residues 444 to 463; the sequence is WDSRGQEATDTEYSEIKIHR. An SLAM-like motif motif is present at residues 454–459; sequence TEYSEI.

It belongs to the immunoglobulin superfamily. SIGLEC (sialic acid binding Ig-like lectin) family. As to expression, expressed by peripheral blood leukocytes (neutrophils and monocytes but not eosinophils). Found in liver, fetal liver, bone marrow, placenta, spleen and in lower levels in skeletal muscle, fetal brain, stomach, lung, thymus, prostate, brain, mammary, adrenal gland, colon, trachea, cerebellum, testis, small intestine and spinal cordon.

It is found in the membrane. In terms of biological role, putative adhesion molecule that mediates sialic-acid dependent binding to cells. Preferentially binds to alpha-2,3- or alpha-2,6-linked sialic acid. The sialic acid recognition site may be masked by cis interactions with sialic acids on the same cell surface. This chain is Sialic acid-binding Ig-like lectin 9 (SIGLEC9), found in Homo sapiens (Human).